We begin with the raw amino-acid sequence, 285 residues long: Glycine--tRNA ligase alpha subunit (285 aa).

Belongs to the class-II aminoacyl-tRNA synthetase family. In terms of assembly, tetramer of two alpha and two beta subunits.

The protein resides in the cytoplasm. The catalysed reaction is tRNA(Gly) + glycine + ATP = glycyl-tRNA(Gly) + AMP + diphosphate. The polypeptide is Glycine--tRNA ligase alpha subunit (Thermodesulfovibrio yellowstonii (strain ATCC 51303 / DSM 11347 / YP87)).